Reading from the N-terminus, the 178-residue chain is MEICWGPYSHLISLLLILLFHSEAACRPSGKRPCKMQAFRIWDTNQKTFYLRNNQLIAGYLQGPNIKLEEKIDMVPIDLHSVFLGIHGGKLCLSCAKSGDDIKLQLEEVNITDLSKNKEEDKRFTFIRSEKGPTTSFESAACPGWFLCTTLEADRPVSLTNTPEEPLIVTKFYFQEDQ.

The first 26 residues, 1 to 26 (MEICWGPYSHLISLLLILLFHSEAAC), serve as a signal peptide directing secretion. Cysteine 92 and cysteine 142 are disulfide-bonded. Asparagine 110 is a glycosylation site (N-linked (GlcNAc...) asparagine).

It belongs to the IL-1 family.

The protein resides in the secreted. It is found in the cytoplasm. Its function is as follows. Anti-inflammatory antagonist of interleukin-1 family of proinflammatory cytokines such as interleukin-1beta/IL1B and interleukin-1alpha/IL1A. Protects from immune dysregulation and uncontrolled systemic inflammation triggered by IL1 for a range of innate stimulatory agents such as pathogens. This is Interleukin-1 receptor antagonist protein (Il1rn) from Mus musculus (Mouse).